The sequence spans 720 residues: ATP-dependent RNA helicase glh-3 (720 aa).

Residues 1–11 show a composition bias toward polar residues; sequence MDKSPTKTSIR. Disordered regions lie at residues 1 to 34 and 125 to 180; these read MDKS…SCIK and LNSR…SYGN. Basic and acidic residues-rich tracts occupy residues 141-154 and 162-172; these read NVKE…RSDD and SAKDEERDRDS. CCHC-type zinc fingers lie at residues 202-219 and 222-239; these read NTCF…ECSA and RECA…ECAS. Residues 298 to 326 carry the Q motif motif; that stretch reads KSFSDSDIPQSMRRNVERAGYTRTTPIQQ. In terms of domain architecture, Helicase ATP-binding spans 329-513; it reads LPLVADGKDI…RKLLREDYTM (185 aa). 342–349 is a binding site for ATP; that stretch reads AQTGSGKT. The DEAD box motif lies at 456 to 459; that stretch reads DEAD. In terms of domain architecture, Helicase C-terminal spans 549–698; it reads DIDTYTTEKN…VVPSWMKEAA (150 aa). Residues 696 to 720 are disordered; it reads EAAGGTSNPNKFEKSIDTEEPEEAW.

The protein belongs to the DEAD box helicase family. DDX4/VASA subfamily. As to quaternary structure, interacts with csn-5. Interacts (via C-terminus) with kgb-1. Interacts with zyx-1.

The protein localises to the cytoplasm. The catalysed reaction is ATP + H2O = ADP + phosphate + H(+). Functionally, probable ATP-binding RNA helicase. The polypeptide is ATP-dependent RNA helicase glh-3 (Caenorhabditis elegans).